Consider the following 659-residue polypeptide: MSSLFPFIFLFLFSFLTSFRASAQDPRFLAYYCPNATTYSSNSTYLTNLKTLLSSLSSRNASYSTGFQNATVGQALDRVTGLFLCRGDVSPEVCRNCVTFAVNNTFSRCPNQREAVFYYEECILRYSHKNILSTAITNEGEFILRNPNHISPIQNQINQFTNLVLSNMNQIAIEAADNPRKFSTIKTELTALQTFYGLVQCTPDLSRQNCMNCLTSSINRMPFSRIGARQFWPSCNSRYELYDFYNETAIGTPPPPLPPLASPSLSDKSGNSNVVVVAVVVPIIVAVLIFIAGYCFFAKRAKKTYGTTPALDEDDKTTIESLQLDYRAIQAATNDFSENNKIGRGGFGDVYKGTFSNGTEVAVKRLSKTSEQGDTEFKNEVVVVANLRHKNLVRILGFSIEREERILVYEYVENKSLDNFLFDPAKKGQLYWTQRYHIIGGIARGILYLHQDSRLTIIHRDLKASNILLDADMNPKIADFGMARIFGMDQTQQNTSRIVGTYGYMSPEYAMRGQFSMKSDVYSFGVLVLEIISGRKNNSFIETDDAQDLVTHAWRLWRNGTALDLVDPFIADSCRKSEVVRCTHIGLLCVQEDPVKRPAMSTISVMLTSNTMALPAPQQPGFFVRSRPGTNRLDSDQSTTNKSVTVSIDDKSMSDLDPR.

An N-terminal signal peptide occupies residues 1 to 23 (MSSLFPFIFLFLFSFLTSFRASA). Over 24–273 (QDPRFLAYYC…SLSDKSGNSN (250 aa)) the chain is Extracellular. Gnk2-homologous domains follow at residues 27 to 131 (RFLA…HKNI) and 142 to 244 (FILR…LYDF). Residues asparagine 35, asparagine 42, asparagine 60, asparagine 69, and asparagine 103 are each glycosylated (N-linked (GlcNAc...) asparagine). Asparagine 246 carries an N-linked (GlcNAc...) asparagine glycan. The helical transmembrane segment at 274–294 (VVVVAVVVPIIVAVLIFIAGY) threads the bilayer. At 295–659 (CFFAKRAKKT…DKSMSDLDPR (365 aa)) the chain is on the cytoplasmic side. A Protein kinase domain is found at 336–622 (FSENNKIGRG…ALPAPQQPGF (287 aa)). Residues 342 to 350 (IGRGGFGDV) and lysine 364 contribute to the ATP site. Tyrosine 409 carries the post-translational modification Phosphotyrosine. Aspartate 461 functions as the Proton acceptor in the catalytic mechanism. Serine 465 is subject to Phosphoserine. A Phosphothreonine modification is found at threonine 501. Tyrosine 509 carries the post-translational modification Phosphotyrosine. The segment at 626 to 659 (SRPGTNRLDSDQSTTNKSVTVSIDDKSMSDLDPR) is disordered. Residues 636–646 (DQSTTNKSVTV) are compositionally biased toward polar residues. Over residues 648–659 (IDDKSMSDLDPR) the composition is skewed to basic and acidic residues.

The protein belongs to the protein kinase superfamily. Ser/Thr protein kinase family. CRK subfamily.

It localises to the membrane. It carries out the reaction L-seryl-[protein] + ATP = O-phospho-L-seryl-[protein] + ADP + H(+). The enzyme catalyses L-threonyl-[protein] + ATP = O-phospho-L-threonyl-[protein] + ADP + H(+). This Arabidopsis thaliana (Mouse-ear cress) protein is Cysteine-rich receptor-like protein kinase 7 (CRK7).